The following is a 312-amino-acid chain: Small ribosomal subunit biogenesis GTPase RsgA (312 aa).

The region spanning 86–245 (QSFLKRPAVA…LADTPGFNRP (160 aa)) is the CP-type G domain. GTP contacts are provided by residues 135 to 138 (TKID) and 187 to 195 (GPSGVGKTS). Zn(2+)-binding residues include Cys-270, Cys-275, His-277, and Cys-283.

The protein belongs to the TRAFAC class YlqF/YawG GTPase family. RsgA subfamily. As to quaternary structure, monomer. Associates with 30S ribosomal subunit, binds 16S rRNA. Zn(2+) serves as cofactor.

The protein resides in the cytoplasm. In terms of biological role, one of several proteins that assist in the late maturation steps of the functional core of the 30S ribosomal subunit. Helps release RbfA from mature subunits. May play a role in the assembly of ribosomal proteins into the subunit. Circularly permuted GTPase that catalyzes slow GTP hydrolysis, GTPase activity is stimulated by the 30S ribosomal subunit. This chain is Small ribosomal subunit biogenesis GTPase RsgA, found in Prochlorococcus marinus (strain NATL1A).